The following is a 159-amino-acid chain: Phosphopantetheine adenylyltransferase (159 aa).

Thr10 provides a ligand contact to substrate. Residues 10-11 (TF) and His18 each bind ATP. Positions 42, 73, and 87 each coordinate substrate. ATP is bound by residues 88 to 90 (GLR), Glu98, and 123 to 129 (YSYVSGT).

The protein belongs to the bacterial CoaD family. Homohexamer. The cofactor is Mg(2+).

The protein localises to the cytoplasm. The enzyme catalyses (R)-4'-phosphopantetheine + ATP + H(+) = 3'-dephospho-CoA + diphosphate. It participates in cofactor biosynthesis; coenzyme A biosynthesis; CoA from (R)-pantothenate: step 4/5. Functionally, reversibly transfers an adenylyl group from ATP to 4'-phosphopantetheine, yielding dephospho-CoA (dPCoA) and pyrophosphate. This Coxiella burnetii (strain CbuK_Q154) (Coxiella burnetii (strain Q154)) protein is Phosphopantetheine adenylyltransferase.